The primary structure comprises 110 residues: UPF0060 membrane protein Veis_0342 (110 aa).

4 helical membrane-spanning segments follow: residues 8 to 28, 33 to 53, 63 to 83, and 90 to 110; these read VLFT…WLVI, PLWL…LLTL, AAYG…VDGV, and VAGA…PASA.

Belongs to the UPF0060 family.

Its subcellular location is the cell inner membrane. The sequence is that of UPF0060 membrane protein Veis_0342 from Verminephrobacter eiseniae (strain EF01-2).